A 343-amino-acid chain; its full sequence is Anthranilate phosphoribosyltransferase (343 aa).

5-phospho-alpha-D-ribose 1-diphosphate is bound by residues Gly84, 87 to 88 (GD), Thr92, 94 to 97 (NIST), 112 to 120 (KHGNRGVSS), and Ser124. Gly84 contacts anthranilate. Mg(2+) is bound at residue Ser96. Anthranilate is bound at residue Asn115. Arg170 provides a ligand contact to anthranilate. Mg(2+) contacts are provided by Asp229 and Glu230.

Belongs to the anthranilate phosphoribosyltransferase family. As to quaternary structure, homodimer. Mg(2+) is required as a cofactor.

The catalysed reaction is N-(5-phospho-beta-D-ribosyl)anthranilate + diphosphate = 5-phospho-alpha-D-ribose 1-diphosphate + anthranilate. Its pathway is amino-acid biosynthesis; L-tryptophan biosynthesis; L-tryptophan from chorismate: step 2/5. Its function is as follows. Catalyzes the transfer of the phosphoribosyl group of 5-phosphorylribose-1-pyrophosphate (PRPP) to anthranilate to yield N-(5'-phosphoribosyl)-anthranilate (PRA). This Burkholderia ambifaria (strain MC40-6) protein is Anthranilate phosphoribosyltransferase.